The primary structure comprises 346 residues: MLVKNTWYVAGMATDCSRKPLARTFLNEKVVLFRTHDGHAVALEDRCCHRLAPLSLGDVEDAGIRCRYHGMVFNASGACVEIPGQEQIPPGMCVRRFPLVERHGLLWIWMGDPARANPDDIVDELWNGAPEWRTDSGYIHYQANYQLIVDNLLDFTHLAWVHPTTLGTDSAASLKPVIERDTTGTGKLTITRWYLNDDMSNLHKGVAKFEGKADRWQIYQWSPPALLRMDTGSAPTGTGAPEGRRVPEAVQFRHTSIQTPETETTSHYWFCQARNFDLDDEALTEKIYQGVVVAFEEDRTMIEAQQKILSQVPDRPMVPIAADAGLNQGRWLLDRLLKAENGGTAP.

The Rieske domain occupies 7–108 (WYVAGMATDC…LVERHGLLWI (102 aa)). Residues cysteine 47, histidine 49, cysteine 66, and histidine 69 each contribute to the [2Fe-2S] cluster site.

As to quaternary structure, homotetramer. Part of the p-toluenesulfonate methyl-monooxygenase complex TsaBM, comprising the reductase TsaB and the oxygenase TsaM. It depends on [2Fe-2S] cluster as a cofactor.

It catalyses the reaction toluene-4-sulfonate + NADH + O2 + H(+) = 4-(hydroxymethyl)benzenesulfonate + NAD(+) + H2O. Involved in the toluene-4-sulfonate degradation pathway. Does not discriminate between the sulfonate and the carboxyl substituents and can also be involved in the p-toluenecarboxylate degradation pathway. The polypeptide is Putative toluene-4-sulfonate monooxygenase system iron-sulfur subunit TsaM2 (tsaM2) (Comamonas testosteroni (Pseudomonas testosteroni)).